The following is a 62-amino-acid chain: Sperm protamine P1 (62 aa).

Residues 1–62 (MARYRHSRSR…RYSRRRRRRY (62 aa)) form a disordered region.

It belongs to the protamine P1 family. As to expression, testis.

Its subcellular location is the nucleus. The protein resides in the chromosome. Its function is as follows. Protamines substitute for histones in the chromatin of sperm during the haploid phase of spermatogenesis. They compact sperm DNA into a highly condensed, stable and inactive complex. The polypeptide is Sperm protamine P1 (PRM1) (Thylogale stigmatica (Red-legged pademelon)).